Here is a 323-residue protein sequence, read N- to C-terminus: tRNA U34 carboxymethyltransferase (323 aa).

Carboxy-S-adenosyl-L-methionine-binding positions include K91, W105, K110, G130, D152–S154, I181–E182, M196, Y200, and R315.

The protein belongs to the class I-like SAM-binding methyltransferase superfamily. CmoB family. Homotetramer.

It carries out the reaction carboxy-S-adenosyl-L-methionine + 5-hydroxyuridine(34) in tRNA = 5-carboxymethoxyuridine(34) in tRNA + S-adenosyl-L-homocysteine + H(+). Catalyzes carboxymethyl transfer from carboxy-S-adenosyl-L-methionine (Cx-SAM) to 5-hydroxyuridine (ho5U) to form 5-carboxymethoxyuridine (cmo5U) at position 34 in tRNAs. This Vibrio parahaemolyticus serotype O3:K6 (strain RIMD 2210633) protein is tRNA U34 carboxymethyltransferase.